Consider the following 710-residue polypeptide: Polyribonucleotide nucleotidyltransferase (710 aa).

The Mg(2+) site is built by Asp-489 and Asp-495. The region spanning 556-615 (PKIDTIKIDVDKIKVVIGKGGETIDKIIAETGVKIDIDDEGNVSIYSSDQAAIDRTKEII) is the KH domain. Positions 625–693 (GEVYHAKVVR…EKGRVDASMK (69 aa)) constitute an S1 motif domain. A disordered region spans residues 691–710 (SMKALIPRPPKPEKKEEKHD). Basic and acidic residues predominate over residues 700 to 710 (PKPEKKEEKHD).

The protein belongs to the polyribonucleotide nucleotidyltransferase family. Mg(2+) serves as cofactor.

It is found in the cytoplasm. The enzyme catalyses RNA(n+1) + phosphate = RNA(n) + a ribonucleoside 5'-diphosphate. Its function is as follows. Involved in mRNA degradation. Catalyzes the phosphorolysis of single-stranded polyribonucleotides processively in the 3'- to 5'-direction. The sequence is that of Polyribonucleotide nucleotidyltransferase from Streptococcus pyogenes serotype M1.